Here is a 199-residue protein sequence, read N- to C-terminus: Extracellular superoxide dismutase [Cu-Zn] (199 aa).

An N-terminal signal peptide occupies residues 1 to 20; sequence MMIASFAIFLSHIIFITYAT. Residues Asn-33, Asn-60, and Asn-70 are each glycosylated (N-linked (GlcNAc...) asparagine). Positions 89, 91, and 106 each coordinate Cu cation. A disulfide bond links Cys-100 and Cys-192. Zn(2+) is bound at residue His-106. The N-linked (GlcNAc...) asparagine glycan is linked to Asn-111. Zn(2+)-binding residues include His-114, His-123, and Asp-126. His-163 is a binding site for Cu cation.

The protein belongs to the Cu-Zn superoxide dismutase family. In terms of assembly, homodimer. The cofactor is Cu cation. Zn(2+) serves as cofactor.

It localises to the secreted. It is found in the extracellular space. The catalysed reaction is 2 superoxide + 2 H(+) = H2O2 + O2. Functionally, protect the extracellular space from toxic effect of reactive oxygen intermediates by converting superoxide radicals into hydrogen peroxide and oxygen. May act in the parasite defense by neutralizing superoxide generated by activated leukocytes, thus acting as both an antioxidant and an anti-inflammatory factor. The sequence is that of Extracellular superoxide dismutase [Cu-Zn] from Brugia pahangi (Filarial nematode worm).